The following is a 224-amino-acid chain: Ribose-5-phosphate isomerase A (224 aa).

Substrate-binding positions include 34 to 37, 87 to 90, and 100 to 103; these read TGST, DGAD, and KGGG. Glu-109 serves as the catalytic Proton acceptor. Position 127 (Lys-127) interacts with substrate.

Belongs to the ribose 5-phosphate isomerase family. In terms of assembly, homodimer.

The enzyme catalyses aldehydo-D-ribose 5-phosphate = D-ribulose 5-phosphate. Its pathway is carbohydrate degradation; pentose phosphate pathway; D-ribose 5-phosphate from D-ribulose 5-phosphate (non-oxidative stage): step 1/1. Catalyzes the reversible conversion of ribose-5-phosphate to ribulose 5-phosphate. In Francisella tularensis subsp. novicida (strain U112), this protein is Ribose-5-phosphate isomerase A.